The following is a 182-amino-acid chain: Large ribosomal subunit protein uL10 (182 aa).

It belongs to the universal ribosomal protein uL10 family. Part of the ribosomal stalk of the 50S ribosomal subunit. The N-terminus interacts with L11 and the large rRNA to form the base of the stalk. The C-terminus forms an elongated spine to which L12 dimers bind in a sequential fashion forming a multimeric L10(L12)X complex.

In terms of biological role, forms part of the ribosomal stalk, playing a central role in the interaction of the ribosome with GTP-bound translation factors. The chain is Large ribosomal subunit protein uL10 from Herminiimonas arsenicoxydans.